Here is a 378-residue protein sequence, read N- to C-terminus: N-acetyllactosaminide beta-1,3-N-acetylglucosaminyltransferase 4 (378 aa).

The Cytoplasmic portion of the chain corresponds to 1 to 28; the sequence is MLPPQPSAAHQGRGGRSGLLPKGPAMLC. Residues 29-49 traverse the membrane as a helical; Signal-anchor for type II membrane protein segment; the sequence is RLCWLVSYSLAVLLLGCLLFL. Residues 50-378 lie on the Lumenal side of the membrane; sequence RKAAKPAGDP…KCAAGPIPQR (329 aa). The segment at 59-81 is disordered; it reads PTAHQPFWAPPTPRHSRCPPNHT. Asparagine 192 carries an N-linked (GlcNAc...) asparagine glycan.

The protein belongs to the glycosyltransferase 31 family. Mainly expressed in brain tissues such as whole brain, hippocampus, amygdala, cerebellum and caudate nucleus. Also expressed in colon, esophagus and kidney.

The protein resides in the golgi apparatus membrane. The catalysed reaction is a beta-D-galactosyl-(1-&gt;4)-N-acetyl-beta-D-glucosaminyl derivative + UDP-N-acetyl-alpha-D-glucosamine = an N-acetyl-beta-D-glucosaminyl-(1-&gt;3)-beta-D-galactosyl-(1-&gt;4)-N-acetyl-beta-D-glucosaminyl derivative + UDP + H(+). It participates in protein modification; protein glycosylation. In terms of biological role, beta-1,3-N-acetylglucosaminyltransferase involved in the synthesis of poly-N-acetyllactosamine. Has activity for type 2 oligosaccharides. The polypeptide is N-acetyllactosaminide beta-1,3-N-acetylglucosaminyltransferase 4 (B3GNT4) (Homo sapiens (Human)).